Consider the following 1303-residue polypeptide: DNA-directed RNA polymerase subunit beta (1303 aa).

It belongs to the RNA polymerase beta chain family. As to quaternary structure, the RNAP catalytic core consists of 2 alpha, 1 beta, 1 beta' and 1 omega subunit. When a sigma factor is associated with the core the holoenzyme is formed, which can initiate transcription.

The catalysed reaction is RNA(n) + a ribonucleoside 5'-triphosphate = RNA(n+1) + diphosphate. Its function is as follows. DNA-dependent RNA polymerase catalyzes the transcription of DNA into RNA using the four ribonucleoside triphosphates as substrates. The sequence is that of DNA-directed RNA polymerase subunit beta from Chlorobaculum tepidum (strain ATCC 49652 / DSM 12025 / NBRC 103806 / TLS) (Chlorobium tepidum).